Here is a 100-residue protein sequence, read N- to C-terminus: Large ribosomal subunit protein uL23c (100 aa).

This sequence belongs to the universal ribosomal protein uL23 family. In terms of assembly, part of the 50S ribosomal subunit.

The protein resides in the plastid. The protein localises to the chloroplast. Functionally, binds to 23S rRNA. This chain is Large ribosomal subunit protein uL23c (rpl23), found in Euglena gracilis.